Reading from the N-terminus, the 156-residue chain is FUN14 domain-containing protein 1 (156 aa).

The YXXL motif lies at 19 to 22; the sequence is YEVL. A run of 3 helical transmembrane segments spans residues 49-69, 76-96, and 135-155; these read YSVA…GFLF, AATA…SGYV, and FIKQ…LGLA.

It belongs to the FUN14 family.

It localises to the mitochondrion outer membrane. Its function is as follows. Acts as an activator of hypoxia-induced mitophagy, an important mechanism for mitochondrial quality control. The chain is FUN14 domain-containing protein 1 (FUNDC1) from Gallus gallus (Chicken).